A 427-amino-acid polypeptide reads, in one-letter code: Serine/threonine-protein kinase AFC2 (427 aa).

Residues 98–423 (YKIYSKMGEG…AREALRHPFF (326 aa)) form the Protein kinase domain. Residues 104–112 (MGEGTFGQV) and Lys127 each bind ATP. The active-site Proton acceptor is Asp223.

Belongs to the protein kinase superfamily. CMGC Ser/Thr protein kinase family. Lammer subfamily.

It catalyses the reaction L-seryl-[protein] + ATP = O-phospho-L-seryl-[protein] + ADP + H(+). It carries out the reaction L-threonyl-[protein] + ATP = O-phospho-L-threonyl-[protein] + ADP + H(+). The catalysed reaction is L-tyrosyl-[protein] + ATP = O-phospho-L-tyrosyl-[protein] + ADP + H(+). The chain is Serine/threonine-protein kinase AFC2 (AFC2) from Arabidopsis thaliana (Mouse-ear cress).